The sequence spans 695 residues: Threonine--tRNA ligase (695 aa).

Residues methionine 1–threonine 76 form the TGS domain. Residues aspartate 279–proline 585 form a catalytic region. Positions 384, 435, and 562 each coordinate Zn(2+).

Belongs to the class-II aminoacyl-tRNA synthetase family. Homodimer. The cofactor is Zn(2+).

Its subcellular location is the cytoplasm. It carries out the reaction tRNA(Thr) + L-threonine + ATP = L-threonyl-tRNA(Thr) + AMP + diphosphate + H(+). Functionally, catalyzes the attachment of threonine to tRNA(Thr) in a two-step reaction: L-threonine is first activated by ATP to form Thr-AMP and then transferred to the acceptor end of tRNA(Thr). Also edits incorrectly charged L-seryl-tRNA(Thr). In Leifsonia xyli subsp. xyli (strain CTCB07), this protein is Threonine--tRNA ligase.